Here is a 253-residue protein sequence, read N- to C-terminus: Ferritin-1, chloroplastic (253 aa).

The N-terminal 47 residues, 1-47 (MALSSSKFSSFSGFSLSPVSGNGVQKPCFCDLRVGEKWGSRKFRVSA), are a transit peptide targeting the chloroplast. An extension peptide (EP) region spans residues 48-80 (TTAPLTGVIFEPFEEVKKDYLAVPSVPLVSLAR). Positions 81–234 (QNFADECESV…EYVAQLRRVG (154 aa)) constitute a Ferritin-like diiron domain. Fe cation is bound by residues E98, H136, E182, and Q216.

It belongs to the ferritin family. In terms of assembly, oligomer of 24 subunits. There are two types of subunits: L (light) chain and H (heavy) chain. The major chain can be light or heavy, depending on the species and tissue type. The functional molecule forms a roughly spherical shell with a diameter of 12 nm and contains a central cavity into which the insoluble mineral iron core is deposited.

It localises to the plastid. The protein localises to the chloroplast. The enzyme catalyses 4 Fe(2+) + O2 + 4 H(+) = 4 Fe(3+) + 2 H2O. Stores iron in a soluble, non-toxic, readily available form. Important for iron homeostasis. Has ferroxidase activity. Iron is taken up in the ferrous form and deposited as ferric hydroxides after oxidation. In Pisum sativum (Garden pea), this protein is Ferritin-1, chloroplastic.